We begin with the raw amino-acid sequence, 356 residues long: Carbohydrate sulfotransferase 10 (356 aa).

Over 1–6 (MHHQWL) the chain is Cytoplasmic. Residues 7-27 (LLAACFWVIFMFMVASKFITL) form a helical; Signal-anchor for type II membrane protein membrane-spanning segment. Residues 28-356 (TFKDPDVYSA…GYQKPDFLLN (329 aa)) lie on the Lumenal side of the membrane. The N-linked (GlcNAc...) asparagine glycan is linked to Asn99. Residues 127 to 133 (PKVGNTQ) and 189 to 197 (RDPFERLIS) contribute to the 3'-phosphoadenylyl sulfate site. 2 N-linked (GlcNAc...) asparagine glycosylation sites follow: Asn228 and Asn316.

This sequence belongs to the sulfotransferase 2 family.

The protein localises to the golgi apparatus membrane. The catalysed reaction is 3-O-{beta-D-GlcA-(1-&gt;[3)-alpha-D-Xyl-(1-&gt;3)-beta-D-GlcA-(1-&gt;](n)-4)-beta-D-Xyl-(1-&gt;4)-Rib-ol-P-Rib-ol-P-3-beta-D-GalNAc-(1-&gt;3)-beta-D-GlcNAc-(1-&gt;4)-O-6-P-alpha-D-Man}-L-Thr-[protein] + 3'-phosphoadenylyl sulfate = 3-O-{O-3-S-beta-D-GlcA-(1-&gt;[3)-alpha-D-Xyl-(1-&gt;3)-beta-D-GlcA-(1-&gt;](n)-4)-beta-D-Xyl-(1-&gt;4)-Rib-ol-P-Rib-ol-P-3-beta-D-GalNAc-(1-&gt;3)-beta-D-GlcNAc-(1-&gt;4)-O-6-P-alpha-D-Man}-L-Thr-[protein] + adenosine 3',5'-bisphosphate + H(+). The enzyme catalyses 17beta-estradiol 3-O-(beta-D-glucuronate) + 3'-phosphoadenylyl sulfate = 17beta-estradiol 3-O-(3-sulfo-beta-D-glucuronate) + adenosine 3',5'-bisphosphate + H(+). It catalyses the reaction 17beta-estradiol 3-O-(beta-D-glucuronate) 17-sulfate + 3'-phosphoadenylyl sulfate = 17beta-estradiol 3-O-(3-sulfo-beta-D-glucuronate) 17-sulfate + adenosine 3',5'-bisphosphate + H(+). It carries out the reaction 17beta-estradiol 17-O-(beta-D-glucuronate) + 3'-phosphoadenylyl sulfate = 17beta-estradiol 17-O-(3-sulfo-beta-D-glucuronate) + adenosine 3',5'-bisphosphate + H(+). The catalysed reaction is 16alpha,17beta-estriol 3-O-(beta-D-glucuronate) + 3'-phosphoadenylyl sulfate = 16alpha,17beta-estriol 3-O-(3-sulfo-beta-D-glucuronate) + adenosine 3',5'-bisphosphate + H(+). The enzyme catalyses 16alpha,17beta-estriol 16-O-(beta-D-glucuronate) + 3'-phosphoadenylyl sulfate = 16alpha,17beta-estriol 16-O-(3-sulfo-beta-D-glucuronate) + adenosine 3',5'-bisphosphate + H(+). It catalyses the reaction 16alpha,17beta-estriol 17-O-(beta-D-glucuronate) + 3'-phosphoadenylyl sulfate = 16alpha,17beta-estriol 17-O-(3-sulfo-beta-D-glucuronate) + adenosine 3',5'-bisphosphate + H(+). It carries out the reaction estrone 3-O-(beta-D-glucuronate) + 3'-phosphoadenylyl sulfate = estrone 3-O-(3-sulfo-beta-D-glucuronate) + adenosine 3',5'-bisphosphate + H(+). The catalysed reaction is 3alpha,20alpha-dihydroxy-5beta-pregnane 3-O-(beta-D-glucuronate) + 3'-phosphoadenylyl sulfate = 3alpha,20alpha-dihydroxy-5beta-pregnane 3-O-(3-sulfo-beta-D-glucuronate) + adenosine 3',5'-bisphosphate + H(+). The enzyme catalyses testosterone 17-O-(beta-D-glucuronate) + 3'-phosphoadenylyl sulfate = testosterone 17-O-(3-sulfo-beta-D-glucuronate) + adenosine 3',5'-bisphosphate + H(+). It catalyses the reaction 3beta-androst-5-en-17-one 3-O-(beta-D-glucuronate) + 3'-phosphoadenylyl sulfate = 3beta-androst-5-en-17-one 3-O-(3-sulfo-beta-D-glucuronate) + adenosine 3',5'-bisphosphate + H(+). It carries out the reaction 3alpha,17alpha-dihydroxy-5beta-androstane-11-one-17beta-carboxylate 3-O-(beta-D-glucuronate) + 3'-phosphoadenylyl sulfate = 3alpha,17alpha-dihydroxy-5beta-androstane-11-one-17beta-carboxylate 3-O-(3-sulfo-beta-D-glucuronate) + adenosine 3',5'-bisphosphate + H(+). The catalysed reaction is 3alpha-hydroxyetiocholan-17-one 3-O-(beta-D-glucuronate) + 3'-phosphoadenylyl sulfate = 3alpha-hydroxyetiocholan-17-one 3-O-(3-sulfo-beta-D-glucuronate) + adenosine 3',5'-bisphosphate + H(+). The protein operates within steroid metabolism. Its pathway is protein modification; carbohydrate sulfation. Functionally, catalyzes the transfer of sulfate from 3'-phosphoadenylyl sulfate (PAPS) to position 3 of terminal glucuronic acid of both protein- and lipid-linked oligosaccharides. Participates in biosynthesis of HNK-1 carbohydrate structure 3-O-sulfo-beta-D-GlcA-(1-&gt;3)-beta-D-Gal-(1-&gt;4)-D-GlcNAc-R, a sulfated glucuronyl-lactosaminyl residue carried by many neural recognition molecules, which is involved in cell interactions during ontogenetic development and in synaptic plasticity in the adult. May be indirectly involved in synapse plasticity of the hippocampus, via its role in HNK-1 biosynthesis. Sulfates terminal glucuronyl residue of the laminin globular (LG)-domain binding epitope on DAG1/alpha-dystroglycan and prevents further polymerization by LARGE1 glycosyltransferase. Likely defines the chain length of LG epitope, conferring binding specificity to extracellular matrix components. Plays a role in down-regulating the steroid hormones. Sulfates glucuronidated estrogens and androgens with an impact in hormone cycle and fertility. Has a preference for glucuronyl moiety at the 3-hydroxyl group of a sterol ring rather than the 17-hydroxyl group, showing high catalytic efficiency for 17beta-estradiol 3-O-(beta-D-glucuronate) and dehydroepiandrosterone 3-O-(beta-D-glucuronate) hormones. This is Carbohydrate sulfotransferase 10 (CHST10) from Pongo abelii (Sumatran orangutan).